A 995-amino-acid chain; its full sequence is Endosome/lysosome-associated apoptosis and autophagy regulator family member 2 (995 aa).

The signal sequence occupies residues 1–21 (MGVFCWSGCLVISLQLLLGAA). The Extracellular portion of the chain corresponds to 22 to 895 (LDNLSTCKEE…ACESIDFWLK (874 aa)). Asn-24, Asn-136, Asn-245, Asn-372, Asn-527, Asn-649, Asn-683, Asn-700, and Asn-758 each carry an N-linked (GlcNAc...) asparagine glycan. In terms of domain architecture, MRH spans 639 to 843 (SECLVTYTNE…LWETAEACPL (205 aa)). Disulfide bonds link Cys-641-Cys-687 and Cys-697-Cys-725. 2 cysteine pairs are disulfide-bonded: Cys-793/Cys-829 and Cys-805/Cys-841. Residue Asn-883 is glycosylated (N-linked (GlcNAc...) asparagine). Residues 896-916 (VGAGVGAFTAVLLIALTCYFW) form a helical membrane-spanning segment. At 917-995 (KKNQKLEYKY…QLKSSRAQNI (79 aa)) the chain is on the cytoplasmic side.

This sequence belongs to the ELAPOR family. Expressed in the animal half of the embryo during gastrulation, becoming restricted to the ventral ectoderm at stage 12.5. At the neurula stage, expressed in the anterior ectoderm surrounding the neural plate, and weakly in the epidermis. Expression is especially high in the presumptive hatching gland and cement gland regions. Surprisingly, by the tailbud stage (stage 22), expression is limited to the hatching gland and is not seen in the cement gland. Conversely, in tadpoles expressed broadly in the head, heart and fin. Expression in the head is seen in the primary mouth and in the brain, eyes, otic vesicles and olfactory pits.

The protein resides in the cell membrane. Functionally, functions as a regulator of the BMP signaling pathway and is involved in epidermal differentiation. The polypeptide is Endosome/lysosome-associated apoptosis and autophagy regulator family member 2 (elapor2) (Xenopus laevis (African clawed frog)).